A 419-amino-acid polypeptide reads, in one-letter code: S-adenosylmethionine synthase (419 aa).

His-15 lines the ATP pocket. Mg(2+) is bound at residue Asp-17. Residue Glu-43 participates in K(+) binding. Residues Glu-56 and Gln-100 each contribute to the L-methionine site. Residues 100 to 110 (QSPDIAQGVNE) form a flexible loop region. Residues 171 to 173 (DGK), 248 to 249 (KF), Asp-257, 263 to 264 (RK), Ala-280, and Lys-284 each bind ATP. Asp-257 is an L-methionine binding site. Lys-288 is an L-methionine binding site.

The protein belongs to the AdoMet synthase family. As to quaternary structure, homotetramer; dimer of dimers. Mg(2+) serves as cofactor. The cofactor is K(+).

The protein localises to the cytoplasm. The catalysed reaction is L-methionine + ATP + H2O = S-adenosyl-L-methionine + phosphate + diphosphate. Its pathway is amino-acid biosynthesis; S-adenosyl-L-methionine biosynthesis; S-adenosyl-L-methionine from L-methionine: step 1/1. Catalyzes the formation of S-adenosylmethionine (AdoMet) from methionine and ATP. The overall synthetic reaction is composed of two sequential steps, AdoMet formation and the subsequent tripolyphosphate hydrolysis which occurs prior to release of AdoMet from the enzyme. The sequence is that of S-adenosylmethionine synthase from Prochlorococcus marinus (strain MIT 9303).